Consider the following 306-residue polypeptide: tRNA (guanine-N(7)-)-methyltransferase (306 aa).

The span at 1–19 (MSSTAPLDSKATEQITTAA) shows a compositional bias: polar residues. A disordered region spans residues 1–65 (MSSTAPLDSK…EASPELPSDE (65 aa)). S-adenosyl-L-methionine contacts are provided by residues G121, 144 to 145 (EI), 180 to 181 (NA), and C200. The active site involves D203. S-adenosyl-L-methionine is bound at residue 278 to 280 (TEE).

The protein belongs to the class I-like SAM-binding methyltransferase superfamily. TrmB family. In terms of assembly, forms a complex with TRM82.

Its subcellular location is the nucleus. It carries out the reaction guanosine(46) in tRNA + S-adenosyl-L-methionine = N(7)-methylguanosine(46) in tRNA + S-adenosyl-L-homocysteine. It participates in tRNA modification; N(7)-methylguanine-tRNA biosynthesis. Its function is as follows. Catalyzes the formation of N(7)-methylguanine at position 46 (m7G46) in tRNA. This Lodderomyces elongisporus (strain ATCC 11503 / CBS 2605 / JCM 1781 / NBRC 1676 / NRRL YB-4239) (Yeast) protein is tRNA (guanine-N(7)-)-methyltransferase.